The sequence spans 53 residues: UPF0391 membrane protein Acid_3618 (53 aa).

Helical transmembrane passes span 6 to 26 (LVFLVFALIAAVLGFGGLAGA) and 28 to 48 (VGIAKILFFVFLVIWLVAFLM).

This sequence belongs to the UPF0391 family.

Its subcellular location is the cell membrane. The chain is UPF0391 membrane protein Acid_3618 from Solibacter usitatus (strain Ellin6076).